The primary structure comprises 414 residues: Probable aminotransferase TAT2 (414 aa).

This sequence belongs to the class-I pyridoxal-phosphate-dependent aminotransferase family. The cofactor is pyridoxal 5'-phosphate.

The protein is Probable aminotransferase TAT2 of Arabidopsis thaliana (Mouse-ear cress).